The chain runs to 343 residues: Phosphate acyltransferase (343 aa).

This sequence belongs to the PlsX family. As to quaternary structure, homodimer. Probably interacts with PlsY.

The protein localises to the cytoplasm. It catalyses the reaction a fatty acyl-[ACP] + phosphate = an acyl phosphate + holo-[ACP]. It functions in the pathway lipid metabolism; phospholipid metabolism. Catalyzes the reversible formation of acyl-phosphate (acyl-PO(4)) from acyl-[acyl-carrier-protein] (acyl-ACP). This enzyme utilizes acyl-ACP as fatty acyl donor, but not acyl-CoA. The polypeptide is Phosphate acyltransferase (Coxiella burnetii (strain Dugway 5J108-111)).